The chain runs to 257 residues: Large ribosomal subunit protein uL3 (257 aa).

At Q151 the chain carries N5-methylglutamine. The interval 218–257 (YPASIKSAANTNTAPADAPVETPAEEAVVDTAATDGAQES) is disordered. Residues 225–236 (AANTNTAPADAP) show a composition bias toward low complexity.

It belongs to the universal ribosomal protein uL3 family. Part of the 50S ribosomal subunit. Forms a cluster with proteins L14 and L19. Post-translationally, methylated by PrmB.

One of the primary rRNA binding proteins, it binds directly near the 3'-end of the 23S rRNA, where it nucleates assembly of the 50S subunit. The sequence is that of Large ribosomal subunit protein uL3 from Sphingopyxis alaskensis (strain DSM 13593 / LMG 18877 / RB2256) (Sphingomonas alaskensis).